Reading from the N-terminus, the 621-residue chain is MALLQISEPGMSPAPHQRRLAVGIDLGTTNSLVAAVRSSIPEVLADERGRALLPSVVRYLPDRTAQIGYRAQDEAVRDPKNTIVSVKRFMGRGLRDVANIEHSPYDFVDAPGMVQIKTAAGVKSPVEISAEILATLRQRAEDSLGDDLVGAVITVPAYFDEAQRQATKDAARLAGLEVLRLLNEPTAAAIAYGLDNAAEGIYAVYDLGGGTFDISVLKLTQGVFEVLATGGDSALGGDDFDQRLLCWIVEQANLQPLSAQDMRLLMVRARAAKEALSEADSTVIDAVLESGEIVHLTLTDEIFEQITAHLVQKTLAPVRKALRDAGVGPEEVKGVVLVGGATRMPSIRKAVGDFFGQNPLTNLDPDRVVALGAAMQANLLAGNHAPGEDWLLLDVIPLSLGVETMGGLVEKIIPRNSTIPVARAQEFTTFKDGQTAMAIHVLQGERELASDCRSLARFELRGIPPMVAGAARIRVTYQVDADGLLSVTARETHSGVEASVTVKPSYGLADDDIARMLQDSFREAEHDMKSRALAEERVEADRLVEATQRALETDGDLLSADERAAVEALMATVREIATGEDHLAIRAAVEKLSHGTDEFAARRMDRSIKSALAGRKVQELG.

Belongs to the heat shock protein 70 family.

Chaperone involved in the maturation of iron-sulfur cluster-containing proteins. Has a low intrinsic ATPase activity which is markedly stimulated by HscB. The protein is Chaperone protein HscA homolog of Cupriavidus taiwanensis (strain DSM 17343 / BCRC 17206 / CCUG 44338 / CIP 107171 / LMG 19424 / R1) (Ralstonia taiwanensis (strain LMG 19424)).